We begin with the raw amino-acid sequence, 170 residues long: Peptide deformylase (170 aa).

Cys91 and His133 together coordinate Fe cation. Residue Glu134 is part of the active site. His137 lines the Fe cation pocket.

It belongs to the polypeptide deformylase family. The cofactor is Fe(2+).

The catalysed reaction is N-terminal N-formyl-L-methionyl-[peptide] + H2O = N-terminal L-methionyl-[peptide] + formate. Its function is as follows. Removes the formyl group from the N-terminal Met of newly synthesized proteins. Requires at least a dipeptide for an efficient rate of reaction. N-terminal L-methionine is a prerequisite for activity but the enzyme has broad specificity at other positions. The sequence is that of Peptide deformylase from Pasteurella multocida (strain Pm70).